Here is an 832-residue protein sequence, read N- to C-terminus: Mechanosensitive cation channel TMEM63B (832 aa).

The Extracellular segment spans residues 1 to 40; the sequence is MLPFLLATLGTTALNNSNPKDYCYSARIRSTVLQGLPFGG. The chain crosses the membrane as a helical span at residues 41–65; sequence VPTVLALDFMCFLALLFLFSILRKV. A lipid anchor (S-palmitoyl cysteine) is attached at Cys-51. Residues 66-145 are Cytoplasmic-facing; the sequence is AWDYGRLALV…KDDEIRDKCG (80 aa). The Mediates endoplasmic reticulum retention signature appears at 86–88; sequence RDR. Phosphoserine is present on residues Ser-111, Ser-113, Ser-114, and Ser-115. Cys-126 carries S-palmitoyl cysteine lipidation. The chain crosses the membrane as a helical span at residues 146 to 178; the sequence is GDAVHYLSFQRHIIGLLVVVGVLSVGIVLPVNF. Topologically, residues 179 to 202 are extracellular; the sequence is SGDLLENNAYSFGRTTIANLKSGN. The helical transmembrane segment at 203–227 threads the bilayer; sequence NLLWLHTSFAFLYLLLTVYSMRRHT. Residues 228–427 are Cytoplasmic-facing; that stretch reads SKMRYKEDDL…IYWEHLSIRG (200 aa). The segment at 231–426 is intracellular linker IL2; confers mechanosensitivity; that stretch reads RYKEDDLVKR…NIYWEHLSIR (196 aa). S-palmitoyl cysteine attachment occurs at residues Cys-382 and Cys-398. Residues 428-457 form a helical membrane-spanning segment; that stretch reads FIWWLRCLVINVVLFILLFFLTTPAIIITT. The Extracellular segment spans residues 458–472; the sequence is MDKFNVTKPVEYLNN. Residue Asn-462 is glycosylated (N-linked (GlcNAc...) asparagine). The chain crosses the membrane as a helical span at residues 473–502; that stretch reads PIITQFFPTLLLWCFSALLPTIVYYSAFFE. Over 503 to 506 the chain is Cytoplasmic; the sequence is AHWT. Residues 507–543 form a helical membrane-spanning segment; the sequence is RSGENRTTMHKCYTFLIFMVLLLPSLGLSSLDLFFRW. Topologically, residues 544–566 are extracellular; that stretch reads LFDKKFLAEAAIRFECVFLPDNG. The chain crosses the membrane as a helical span at residues 567–599; sequence AFFVNYVIASAFIGNAMDLLRIPGLLMYMIRLC. A gating helix region spans residues 567–599; that stretch reads AFFVNYVIASAFIGNAMDLLRIPGLLMYMIRLC. Over 600–619 the chain is Cytoplasmic; that stretch reads LARSAAERRNVKRHQAYEFQ. The helical transmembrane segment at 620 to 638 threads the bilayer; the sequence is FGAAYAWMMCVFTVVMTYS. At 639 to 641 the chain is on the extracellular side; the sequence is ITC. A helical transmembrane segment spans residues 642-666; sequence PIIVPFGLMYMLLKHLVDRYNLYYA. Residues 667–673 are Cytoplasmic-facing; the sequence is YLPAKLD. Residues 674 to 702 form a helical membrane-spanning segment; it reads KKIHSGAVNQVVAAPILCLFWLLFFSTMR. Residues 703-707 are Extracellular-facing; that stretch reads TGFLA. A helical transmembrane segment spans residues 708–728; sequence PTSMFTFVVLVITIVICLCHV. 2 S-palmitoyl cysteine lipidation sites follow: Cys-726 and Cys-729. Residues 729-832 are Cytoplasmic-facing; it reads CFGHFKYLSA…DSLIENEIHQ (104 aa). Residues 780 to 814 form a disordered region; that stretch reads EVDGDGDGAPGSSGDEPPSSSSQDEELLMPPDALT. A compositionally biased stretch (low complexity) spans 789-801; the sequence is PGSSGDEPPSSSS.

This sequence belongs to the CSC1 (TC 1.A.17) family. As to quaternary structure, monomer. Interacts with SLC19A2; interaction is required for the phospholipid scramblase activity. In terms of processing, palmitoylation is required for localization to the plasma membrane and stability. N-Glycosylated.

Its subcellular location is the cell membrane. It is found in the endoplasmic reticulum membrane. The protein resides in the lysosome membrane. The protein localises to the early endosome membrane. The catalysed reaction is Ca(2+)(in) = Ca(2+)(out). It catalyses the reaction Mg(2+)(in) = Mg(2+)(out). It carries out the reaction K(+)(in) = K(+)(out). The enzyme catalyses Na(+)(in) = Na(+)(out). The catalysed reaction is Cs(+)(in) = Cs(+)(out). It catalyses the reaction a 1,2-diacyl-sn-glycero-3-phosphocholine(in) = a 1,2-diacyl-sn-glycero-3-phosphocholine(out). It carries out the reaction a sphingomyelin(in) = a sphingomyelin(out). In terms of biological role, mechanosensitive cation channel with low conductance and high activation threshold. Osmosensitive cation channel preferentially activated by hypotonic stress. Also acts as a phospholipid scramblase in response to changes in membrane structure: upon changes in membrane curvature and thickness, alters its conformation and translocates phospholipids, such as phosphatidylcholine and sphingomyelin, thereby controlling plasma membrane lipid distribution. Forms a heterodimer with SLC19A2, which mediates phospholipid scramblase activity following Ca(2+) stimulation. Expressed in excitatory neurons of the subfornical organ and functions as a thirst receptor that mediates neuronal response to hyperosmolality to drive thirst and drinking behavior. Facilitates intestinal motility by promoting proliferation of intestinal stem cells. Essential for the baby's first breath and respiration throughout life. Upon lung inflation conducts cation currents in alveolar type 1 and 2 cells triggering lamellar body exocytosis and surfactant secretion into airspace. Acts as an osmosensor in cochlear outer hair cells (OHCs) where it mediates calcium influx and regulatory volume decrease response. Required for the maintenance of OHC morphology, OHC survival and normal hearing. The protein is Mechanosensitive cation channel TMEM63B of Homo sapiens (Human).